Reading from the N-terminus, the 428-residue chain is Glutamate-1-semialdehyde 2,1-aminomutase 1 (428 aa).

Lys268 is modified (N6-(pyridoxal phosphate)lysine).

The protein belongs to the class-III pyridoxal-phosphate-dependent aminotransferase family. HemL subfamily. As to quaternary structure, homodimer. It depends on pyridoxal 5'-phosphate as a cofactor.

The protein localises to the cytoplasm. The enzyme catalyses (S)-4-amino-5-oxopentanoate = 5-aminolevulinate. The protein operates within porphyrin-containing compound metabolism; protoporphyrin-IX biosynthesis; 5-aminolevulinate from L-glutamyl-tRNA(Glu): step 2/2. The protein is Glutamate-1-semialdehyde 2,1-aminomutase 1 of Geobacillus kaustophilus (strain HTA426).